The primary structure comprises 1194 residues: DNA polymerase catalytic subunit (1194 aa).

It belongs to the DNA polymerase type-B family. As to quaternary structure, forms a complex with the ssDNA-binding protein, the DNA polymerase processivity factor, and the alkaline exonuclease. Interacts with the helicase-primase complex composed of the primase, the helicase and the primase-associated factor; this interaction may coordinate leading and lagging strand DNA synthesis at the replication fork.

It localises to the host nucleus. The catalysed reaction is DNA(n) + a 2'-deoxyribonucleoside 5'-triphosphate = DNA(n+1) + diphosphate. The enzyme catalyses Endonucleolytic cleavage to 5'-phosphomonoester.. Replicates viral genomic DNA. The replication complex is composed of six viral proteins: the DNA polymerase, processivity factor, primase, primase-associated factor, helicase, and ssDNA-binding protein. Additionally, the polymerase contains an intrinsic ribonuclease H (RNase H) activity that specifically degrades RNA/DNA heteroduplexes or duplex DNA substrates in the 5' to 3' direction. Therefore, it can catalyze the excision of the RNA primers that initiate the synthesis of Okazaki fragments at a replication fork during viral DNA replication. The sequence is that of DNA polymerase catalytic subunit from Varicella-zoster virus (strain Dumas) (HHV-3).